Here is an 87-residue protein sequence, read N- to C-terminus: Exodeoxyribonuclease 7 small subunit (87 aa).

This sequence belongs to the XseB family. Heterooligomer composed of large and small subunits.

The protein resides in the cytoplasm. It catalyses the reaction Exonucleolytic cleavage in either 5'- to 3'- or 3'- to 5'-direction to yield nucleoside 5'-phosphates.. In terms of biological role, bidirectionally degrades single-stranded DNA into large acid-insoluble oligonucleotides, which are then degraded further into small acid-soluble oligonucleotides. This Xanthomonas campestris pv. campestris (strain 8004) protein is Exodeoxyribonuclease 7 small subunit.